A 450-amino-acid chain; its full sequence is MKSTETTYKKDNMGLTPSQIVNELNRFIVGQDKAKKAVAIALRNRYRRKRVEGNLRNEIVPKNILMIGSTGVGKTEIARRLAKLTNSPFYKIEATKFTEVGYVGRDVESIIRDLVEIAVNTEKALAKIAVDINAREKAIERILDSLVGKTSSSETREKFKAKVLNGELDDTEIEISVADTTPVGGGGFEIPCIPGASMGVLNLGDMIGRALGNSKTKTKKMLIKDAMTVIIPEESEKLIDQEKIIQKAINLAENDGIVFIDEIDKIASTSNAGAKNAEISREGVQRDLLPLIEGTTVNTKYGPVKTDHILFIASGAFHIAKPSDLLPELQGRLPIRVELNLLTKDDMIKILLEPETSLIKQYSALIGTEEVHLEFTDAAIEKIADYAITVNLEVEDIGARRLHTILENLLEDISFEASEMKVKKIIIDDKFVENQLSKIITNLDLAKFVL.

Residues Val-29, 71–76, Asp-261, Glu-328, and Arg-400 each bind ATP; that span reads GVGKTE.

This sequence belongs to the ClpX chaperone family. HslU subfamily. As to quaternary structure, a double ring-shaped homohexamer of HslV is capped on each side by a ring-shaped HslU homohexamer. The assembly of the HslU/HslV complex is dependent on binding of ATP.

The protein resides in the cytoplasm. Its function is as follows. ATPase subunit of a proteasome-like degradation complex; this subunit has chaperone activity. The binding of ATP and its subsequent hydrolysis by HslU are essential for unfolding of protein substrates subsequently hydrolyzed by HslV. HslU recognizes the N-terminal part of its protein substrates and unfolds these before they are guided to HslV for hydrolysis. This Rickettsia prowazekii (strain Madrid E) protein is ATP-dependent protease ATPase subunit HslU.